A 494-amino-acid polypeptide reads, in one-letter code: Leucine-rich repeat extensin-like protein 4 (494 aa).

The first 25 residues, 1 to 25 (MKNNTTQSLLLLLLFFFFFFEISHS), serve as a signal peptide directing secretion. N-linked (GlcNAc...) asparagine glycans are attached at residues asparagine 60, asparagine 94, and asparagine 106. 9 LRR repeats span residues 121-145 (IRTV…LGLL), 146-168 (TDLA…KFKQ), 169-193 (LKLL…VLHL), 194-217 (PSLK…LFSK), 219-240 (LDAI…FGDS), 242-263 (VSVI…LVEM), 264-287 (KNLN…IGRL), 289-311 (NVTV…VGGM), and 312-335 (VEVE…ICQL). Asparagine 289 is a glycosylation site (N-linked (GlcNAc...) asparagine). N-linked (GlcNAc...) asparagine glycosylation is present at asparagine 340. The segment at 404–494 (SPPIVALPPP…YASPPPPPFY (91 aa)) is contains the Ser-Pro(4) repeats. Pro residues predominate over residues 422–479 (PPVYSPPPSPPVFSPPPSPPVYSPPPPPSIHYSSPPPPPVHHSSPPPPSPEFEGPLPP). A disordered region spans residues 422 to 482 (PPVYSPPPSP…FEGPLPPVIG (61 aa)).

In terms of processing, hydroxylated on proline residues in the S-P-P-P-P repeat. Post-translationally, O-glycosylated on hydroxyprolines. Expressed in roots, stems, leaves and flowers, mostly in vascular tissues.

The protein localises to the secreted. It localises to the cell wall. Its function is as follows. Modulates cell morphogenesis by regulating cell wall formation and assembly, and/or growth polarization. In Arabidopsis thaliana (Mouse-ear cress), this protein is Leucine-rich repeat extensin-like protein 4 (LRX4).